A 176-amino-acid polypeptide reads, in one-letter code: RNA pyrophosphohydrolase (176 aa).

One can recognise a Nudix hydrolase domain in the interval 8–159 (PYRTCVGMML…KRPVYERVVK (152 aa)). The Nudix box motif lies at 47-68 (GGVDPGEDTWAAAKRELYEETS).

Belongs to the Nudix hydrolase family. RppH subfamily. A divalent metal cation is required as a cofactor.

Functionally, accelerates the degradation of transcripts by removing pyrophosphate from the 5'-end of triphosphorylated RNA, leading to a more labile monophosphorylated state that can stimulate subsequent ribonuclease cleavage. This Rhodopseudomonas palustris (strain BisA53) protein is RNA pyrophosphohydrolase.